The sequence spans 214 residues: A-type ATP synthase subunit D (214 aa).

Belongs to the V-ATPase D subunit family. As to quaternary structure, has multiple subunits with at least A(3), B(3), C, D, E, F, H, I and proteolipid K(x).

The protein resides in the cell membrane. Component of the A-type ATP synthase that produces ATP from ADP in the presence of a proton gradient across the membrane. The chain is A-type ATP synthase subunit D from Pyrococcus horikoshii (strain ATCC 700860 / DSM 12428 / JCM 9974 / NBRC 100139 / OT-3).